Here is a 21-residue protein sequence, read N- to C-terminus: Cyanophlyctin (21 aa).

As to expression, expressed by the skin glands.

It localises to the secreted. Functionally, has antibacterial activity against E.coli HP101BA (MIC=6.4 uM), K.pneumoniae PTCC1388 (MIC=7.3 uM), M.luteus PTCC1625 (MIC=4.7 uM) and S.aureus PTCC1431 (MIC=5.3 uM). Has no or very limited (&lt;3%) hemolytic activity at concentrations of 15 ug/ml and 60 ug/ml, respectively. The sequence is that of Cyanophlyctin from Euphlyctis cyanophlyctis (Skittering frog).